Consider the following 136-residue polypeptide: MRDHLPPGLPPDPFADDPCDPSAALEAVEPGQPLDQQERMAVEADLADLAVYEALLAHKGIRGLVVCCDECQQDHYHDWDMLRSNLLQLLIDGTVRPHEPAYDPEPDSYVTWDYCRGYADASLNEAAPDADRFRRR.

The interval 1–33 (MRDHLPPGLPPDPFADDPCDPSAALEAVEPGQP) is disordered.

To M.leprae ML0386.

This is an uncharacterized protein from Mycobacterium tuberculosis (strain CDC 1551 / Oshkosh).